A 131-amino-acid chain; its full sequence is MVMTDPIADMLTAIRNANMVRHEKLEVPASKIKREIAEILKREGFIRDYEYIEDNKQGILRIFLKYGPNERVITGLKRISKPGLRVYVKAHEVPRVLNGLGIAILSTSQGVLTDKEARQKGTGGEIIAYVI.

It belongs to the universal ribosomal protein uS8 family. In terms of assembly, part of the 30S ribosomal subunit. Contacts proteins S5 and S12.

One of the primary rRNA binding proteins, it binds directly to 16S rRNA central domain where it helps coordinate assembly of the platform of the 30S subunit. The chain is Small ribosomal subunit protein uS8 from Geobacillus stearothermophilus (Bacillus stearothermophilus).